We begin with the raw amino-acid sequence, 189 residues long: Pyridoxal 5'-phosphate synthase subunit PdxT (189 aa).

47 to 49 contacts L-glutamine; the sequence is GES. The Nucleophile role is filled by Cys79. L-glutamine is bound by residues Arg105 and 132 to 133; that span reads IR. Active-site charge relay system residues include His168 and Glu170.

This sequence belongs to the glutaminase PdxT/SNO family. As to quaternary structure, in the presence of PdxS, forms a dodecamer of heterodimers. Only shows activity in the heterodimer.

It catalyses the reaction aldehydo-D-ribose 5-phosphate + D-glyceraldehyde 3-phosphate + L-glutamine = pyridoxal 5'-phosphate + L-glutamate + phosphate + 3 H2O + H(+). The catalysed reaction is L-glutamine + H2O = L-glutamate + NH4(+). It participates in cofactor biosynthesis; pyridoxal 5'-phosphate biosynthesis. Catalyzes the hydrolysis of glutamine to glutamate and ammonia as part of the biosynthesis of pyridoxal 5'-phosphate. The resulting ammonia molecule is channeled to the active site of PdxS. The protein is Pyridoxal 5'-phosphate synthase subunit PdxT of Methanocorpusculum labreanum (strain ATCC 43576 / DSM 4855 / Z).